We begin with the raw amino-acid sequence, 33 residues long: Photosystem II reaction center protein Psb30 (33 aa).

A helical membrane pass occupies residues 5-25; it reads LIVQLTSLILISIAGPIIIAL.

It belongs to the Psb30/Ycf12 family. In terms of assembly, PSII is composed of 1 copy each of membrane proteins PsbA, PsbB, PsbC, PsbD, PsbE, PsbF, PsbH, PsbI, PsbJ, PsbK, PsbL, PsbM, PsbT, PsbY, PsbZ, Psb30/Ycf12, peripheral proteins of the oxygen-evolving complex and a large number of cofactors. It forms dimeric complexes.

It is found in the plastid. Its subcellular location is the chloroplast thylakoid membrane. In terms of biological role, a core subunit of photosystem II (PSII), probably helps stabilize the reaction center. This is Photosystem II reaction center protein Psb30 from Euglena myxocylindracea.